Reading from the N-terminus, the 173-residue chain is ATP-dependent protease subunit HslV (173 aa).

The active site involves Thr2. Positions 158, 161, and 164 each coordinate Na(+).

This sequence belongs to the peptidase T1B family. HslV subfamily. A double ring-shaped homohexamer of HslV is capped on each side by a ring-shaped HslU homohexamer. The assembly of the HslU/HslV complex is dependent on binding of ATP.

It is found in the cytoplasm. The catalysed reaction is ATP-dependent cleavage of peptide bonds with broad specificity.. Its activity is regulated as follows. Allosterically activated by HslU binding. In terms of biological role, protease subunit of a proteasome-like degradation complex believed to be a general protein degrading machinery. This chain is ATP-dependent protease subunit HslV, found in Actinobacillus pleuropneumoniae serotype 5b (strain L20).